Here is a 309-residue protein sequence, read N- to C-terminus: Probable ABC transporter permease protein YesP (309 aa).

A run of 6 helical transmembrane segments spans residues 29 to 49, 84 to 104, 114 to 134, 167 to 187, 217 to 237, and 275 to 295; these read FIIG…FLSF, FTYV…IAVI, IYRT…VAIM, ALWT…LIFL, LPIL…SAFM, and YASA…LILF. Residues 80–294 enclose the ABC transmembrane type-1 domain; it reads LKVTFTYVLA…VIVGLITLIL (215 aa).

The protein belongs to the binding-protein-dependent transport system permease family. MalFG subfamily.

The protein localises to the cell membrane. Functionally, part of a binding-protein-dependent transport system. Probably responsible for the translocation of the substrate across the membrane. The sequence is that of Probable ABC transporter permease protein YesP (yesP) from Bacillus subtilis (strain 168).